The chain runs to 263 residues: UPF0739 protein C1orf74 homolog (263 aa).

Belongs to the UPF0739 family.

The chain is UPF0739 protein C1orf74 homolog from Rattus norvegicus (Rat).